The sequence spans 175 residues: Large ribosomal subunit protein uL10 (175 aa).

It belongs to the universal ribosomal protein uL10 family. In terms of assembly, part of the ribosomal stalk of the 50S ribosomal subunit. The N-terminus interacts with L11 and the large rRNA to form the base of the stalk. The C-terminus forms an elongated spine to which L12 dimers bind in a sequential fashion forming a multimeric L10(L12)X complex.

Forms part of the ribosomal stalk, playing a central role in the interaction of the ribosome with GTP-bound translation factors. In Delftia acidovorans (strain DSM 14801 / SPH-1), this protein is Large ribosomal subunit protein uL10.